The following is a 195-amino-acid chain: Adenylate kinase (195 aa).

8–16 (GIPGVGKTT) contributes to the ATP binding site.

The protein belongs to the archaeal adenylate kinase family.

It is found in the cytoplasm. It catalyses the reaction AMP + ATP = 2 ADP. This chain is Adenylate kinase, found in Saccharolobus islandicus (strain M.14.25 / Kamchatka #1) (Sulfolobus islandicus).